The sequence spans 306 residues: HORMA domain-containing protein 2 (306 aa).

The 204-residue stretch at 29-232 folds into the HORMA domain; it reads HESLVVVKKL…SGFHSMKVKV (204 aa). Serine 271 bears the Phosphoserine mark.

In terms of assembly, interacts with HORMAD1. Post-translationally, phosphorylated in a SPO11-dependent manner. As to expression, specifically expressed in meiotic germ cells.

The protein resides in the nucleus. The protein localises to the chromosome. Functionally, essential for synapsis surveillance during meiotic prophase via the recruitment of ATR activity. Plays a key role in the male mid-pachytene checkpoint and the female meiotic prophase checkpoint: required for efficient build-up of ATR activity on unsynapsed chromosome regions, a process believed to form the basis of meiotic silencing of unsynapsed chromatin (MSUC) and meiotic prophase quality control in both sexes. Required for the DNA double-strand break-independent, BRCA1-dependent activation of ATR on the sex chromosomes that is essential for normal sex body formation. The sequence is that of HORMA domain-containing protein 2 (Hormad2) from Mus musculus (Mouse).